The sequence spans 489 residues: Rhamnulokinase (489 aa).

Residue 13 to 17 (ASSGR) coordinates ATP. A disulfide bridge links C68 with C222. Residues G83 and 236–238 (HDT) contribute to the substrate site. The active-site Proton acceptor is D237. T259 is an ATP binding site. N296 contributes to the substrate binding site. Position 304 (Q304) interacts with ATP. Cysteines 353 and 370 form a disulfide. An ATP-binding site is contributed by G402. C413 and C417 are joined by a disulfide.

It belongs to the rhamnulokinase family. In terms of assembly, monomer. It depends on Mg(2+) as a cofactor.

The enzyme catalyses L-rhamnulose + ATP = L-rhamnulose 1-phosphate + ADP + H(+). It functions in the pathway carbohydrate degradation; L-rhamnose degradation; glycerone phosphate from L-rhamnose: step 2/3. In terms of biological role, involved in the catabolism of L-rhamnose (6-deoxy-L-mannose). Catalyzes the transfer of the gamma-phosphate group from ATP to the 1-hydroxyl group of L-rhamnulose to yield L-rhamnulose 1-phosphate. The protein is Rhamnulokinase of Escherichia coli O7:K1 (strain IAI39 / ExPEC).